Reading from the N-terminus, the 311-residue chain is Coproporphyrin III ferrochelatase 1 (311 aa).

Fe-coproporphyrin III-binding positions include Tyr12, Arg29, 45–46 (RY), Ser53, and Tyr124. His182 and Glu263 together coordinate Fe(2+).

Belongs to the ferrochelatase family.

It is found in the cytoplasm. The catalysed reaction is Fe-coproporphyrin III + 2 H(+) = coproporphyrin III + Fe(2+). It functions in the pathway porphyrin-containing compound metabolism; protoheme biosynthesis. Its function is as follows. Involved in coproporphyrin-dependent heme b biosynthesis. Catalyzes the insertion of ferrous iron into coproporphyrin III to form Fe-coproporphyrin III. This chain is Coproporphyrin III ferrochelatase 1, found in Bacillus cereus (strain ZK / E33L).